The following is a 367-amino-acid chain: MISWLDIYHVVSATVPLYVSMTLGFLSARHLKLFSPEQCAGINKFVAKFSIPLLSFQIISENNPFKMSPKLILSDILQKFLVVVVLAMVLRFWHPTGGRGGKLGWVITGLSISVLPNTLILGMPILSAIYGDEAASILEQIVVLQSLIWYTILLFLFELNAARALPSSGASLEHTGNDQEEANIEDEPKEEEDEEEVAIVRTRSVGTMKILLKAWRKLIINPNTYATLIGIIWATLHFRLGWNLPEMIDKSIHLLSDGGLGMAMFSLGLFMASQSSIIACGTKMAIITMLLKFVLGPALMIASAYCIRLKSTLFKVAILQAALPQGVVPFVFAKEYNLHPEIISTGVIFGMLIALPTTLAYYFLLDL.

The Extracellular segment spans residues 1–6 (MISWLD). The helical transmembrane segment at 7–27 (IYHVVSATVPLYVSMTLGFLS) threads the bilayer. Over 28–38 (ARHLKLFSPEQ) the chain is Cytoplasmic. The helical transmembrane segment at 39-59 (CAGINKFVAKFSIPLLSFQII) threads the bilayer. Ile-51 lines the (indol-3-yl)acetate pocket. Residues 60–69 (SENNPFKMSP) lie on the Extracellular side of the membrane. The helical transmembrane segment at 70–90 (KLILSDILQKFLVVVVLAMVL) threads the bilayer. Residues 91–105 (RFWHPTGGRGGKLGW) are Cytoplasmic-facing. A helical membrane pass occupies residues 106–126 (VITGLSISVLPNTLILGMPIL). (indol-3-yl)acetate contacts are provided by Asn-117 and Leu-119. The Extracellular portion of the chain corresponds to 127-136 (SAIYGDEAAS). A helical membrane pass occupies residues 137 to 157 (ILEQIVVLQSLIWYTILLFLF). Residue Tyr-150 coordinates (indol-3-yl)acetate. Residues 158–227 (ELNAARALPS…LIINPNTYAT (70 aa)) lie on the Cytoplasmic side of the membrane. Residues 168–194 (SGASLEHTGNDQEEANIEDEPKEEEDE) form a disordered region. The segment covering 178–194 (DQEEANIEDEPKEEEDE) has biased composition (acidic residues). A helical transmembrane segment spans residues 228–248 (LIGIIWATLHFRLGWNLPEMI). Residues 249–251 (DKS) lie on the Extracellular side of the membrane. Residues 252–272 (IHLLSDGGLGMAMFSLGLFMA) traverse the membrane as a helical segment. Over 273–288 (SQSSIIACGTKMAIIT) the chain is Cytoplasmic. A helical transmembrane segment spans residues 289–309 (MLLKFVLGPALMIASAYCIRL). Residues 310–312 (KST) are Extracellular-facing. Residues 313–333 (LFKVAILQAALPQGVVPFVFA) traverse the membrane as a helical segment. (indol-3-yl)acetate contacts are provided by Val-327 and Val-328. The Cytoplasmic segment spans residues 334–344 (KEYNLHPEIIS). A helical transmembrane segment spans residues 345–365 (TGVIFGMLIALPTTLAYYFLL). Over 366–367 (DL) the chain is Extracellular.

It belongs to the auxin efflux carrier (TC 2.A.69.1) family. Homodimer. Expressed in veins of mature leaves. Strongly expressed in pollen.

The protein localises to the endoplasmic reticulum membrane. The protein resides in the cell membrane. With respect to regulation, auxin efflux carrier activity is competitively inhibited by naptalamate (N-1-naphthylphthalamic acid, NPA). Acts as a component of the auxin efflux carrier. Component of the intracellular auxin-transport pathway in the male gametophyte. Involved in the regulation of auxin homeostasis in pollen. Involved in the efflux of auxin from the endoplasmic reticulum into the cytoplasm. Binds auxins including indole-3-acetic acid (IAA), naphthaleneacetic acid (NAA) and the herbicide 2,4-dichlorophenoxyacetic acid (2,4-D), but barely indole-3-butyric acid (IBA) and 2-phenylacetic acid (PAA). PIN5 and PIN8 may have an antagonistic/compensatory activity. Involved in the control of vein patterning. Redundantly with PIN6, inhibits the vein-formation-promoting functions of PIN5. PIN5, PIN6, and PIN8 control vein network geometry, but they are expressed in mutually exclusive domains of leaf vascular cells. The polypeptide is Auxin efflux carrier component 8 (Arabidopsis thaliana (Mouse-ear cress)).